A 474-amino-acid chain; its full sequence is F420-non-reducing hydrogenase vhc subunit A (474 aa).

The Ni(2+) site is built by Cys-61, Cys-64, Cys-445, and Cys-448.

Belongs to the [NiFe]/[NiFeSe] hydrogenase large subunit family. As to quaternary structure, the F420-non-reducing hydrogenase vhc is composed of three subunits; VhcA, VhcD and VhcG. The cofactor is Ni(2+).

This Methanococcus voltae protein is F420-non-reducing hydrogenase vhc subunit A (vhcA).